A 143-amino-acid chain; its full sequence is Interleukin-4 (143 aa).

An N-terminal signal peptide occupies residues 1–19 (MGLSPQLAAVLLCLLVCTG). 2 disulfide bridges follow: C48–C88 and C70–C115. N62 and N91 each carry an N-linked (GlcNAc...) asparagine glycan.

It belongs to the IL-4/IL-13 family.

Its subcellular location is the secreted. Participates in at least several B-cell activation processes as well as of other cell types. It is a costimulator of DNA-synthesis. It induces the expression of class II MHC molecules on resting B-cells. It enhances both secretion and cell surface expression of IgE and IgG1. It also regulates the expression of the low affinity Fc receptor for IgE (CD23) on both lymphocytes and monocytes. Positively regulates IL31RA expression in macrophages. Stimulates autophagy in dendritic cells by interfering with mTORC1 signaling and through the induction of RUFY4. This chain is Interleukin-4 (IL4), found in Meriones unguiculatus (Mongolian jird).